A 530-amino-acid polypeptide reads, in one-letter code: Amidase FVEG_08295 (530 aa).

Active-site charge relay system residues include K138 and S214. Substrate-binding positions include S214 and 235-238 (IAGS). S238 serves as the catalytic Acyl-ester intermediate.

Belongs to the amidase family.

The catalysed reaction is a monocarboxylic acid amide + H2O = a monocarboxylate + NH4(+). Its pathway is xenobiotic degradation. Amidase; part of the Fusarium detoxification of benzoxazolinone cluster 1 (FDB1) involved in the degradation of benzoxazolinones produced by the host plant. Maize, wheat, and rye produce the 2 benzoxazinone phytoanticipins 2,4-dihy-droxy-7-methoxy-1,4-benzoxazin-3-one (DIMBOA) and 2,4-dihydroxy-1,4-benzoxazin-3-one (DIBOA) that, due to their inherent instability once released, spontaneously degrade to the more stable corresponding benzoxazolinones, 6-methoxy-2-benzoxazolinone (MBOA) and 2-benzoxazolinone (BOA), respectively. The first step in the detoxification of benzoxazolinones involves the hydrolysis of the cyclic ester bond of benzoxazolinones by the FDB1 cluster gamma-lactamase MBL1 to aminophenols. MBL1 is able to convert BOA into 2-aminophenol (2-AP), as well as MBOA into 5-methoxy-2-aminophenol (2-AMP). The FDB2 cluster N-malonyltransferase FDB2/NAT1 then metabolizes aminophenols via N-malonylation to non-toxic malonamic acids. FDB2/NAT1 converts 2-AP into N-(2-hydroxyphenyl) malonamic acid (HPMA) and 2-AMP into N-(2-hydroxy-4-methoxyphenyl) malonamic acid (HMPMA). The duplicated dienlactone hydrolases DLH1 and DLH2 may provide redundant function for hydrolyzing the lactone moiety in the BOA molecule. The roles of the amidases an other enzymes encoded by the 2 FDB clusters have not been identified so far. The polypeptide is Amidase FVEG_08295 (Gibberella moniliformis (strain M3125 / FGSC 7600) (Maize ear and stalk rot fungus)).